The chain runs to 867 residues: Cadherin-related family member 1 (867 aa).

The signal sequence occupies residues 1 to 21 (MGRGPPAVLAPWMLFLSLAQA). Over 22-701 (NFAPHFFDNG…LMQTKDNPMK (680 aa)) the chain is Extracellular. Cadherin domains are found at residues 36 to 135 (NGNM…APRF), 136 to 247 (IQEP…GPVF), 248 to 354 (VGTP…PPTF), 360 to 473 (PQNR…VPKF), 474 to 577 (TSHY…YPQF), and 574 to 689 (YPQF…SPMA). Residues asparagine 58 and asparagine 89 are each glycosylated (N-linked (GlcNAc...) asparagine). 2 N-linked (GlcNAc...) asparagine glycosylation sites follow: asparagine 288 and asparagine 297. Residues 702–722 (AVGVLAGIMAIIVAITVLIST) form a helical membrane-spanning segment. At 723–867 (ATFWRNKKSN…KKNLHSKAYF (145 aa)) the chain is on the cytoplasmic side. A disordered region spans residues 767–843 (KFVLREAPPN…VAKRKAVGSP (77 aa)). The segment covering 777–786 (ENCNNNSRGS) has biased composition (polar residues). A compositionally biased stretch (pro residues) spans 790-802 (PQAPAPPPPPSPA).

As to quaternary structure, interacts with PROM1. In terms of processing, undergoes proteolytic cleavage; produces a soluble 95 kDa N-terminal fragment and a 25 kDa cell-associated C-terminal fragment. As to expression, expressed in photoreceptor cells of the outer nuclear layer of the retina.

It is found in the cell membrane. Potential calcium-dependent cell-adhesion protein. May be required for the structural integrity of the outer segment (OS) of photoreceptor cells. This Bos taurus (Bovine) protein is Cadherin-related family member 1 (CDHR1).